A 1096-amino-acid chain; its full sequence is DNA-directed RNA polymerase subunit beta (1096 aa).

This sequence belongs to the RNA polymerase beta chain family. In terms of assembly, in plastids the minimal PEP RNA polymerase catalytic core is composed of four subunits: alpha, beta, beta', and beta''. When a (nuclear-encoded) sigma factor is associated with the core the holoenzyme is formed, which can initiate transcription.

The protein resides in the plastid. Its subcellular location is the chloroplast. It carries out the reaction RNA(n) + a ribonucleoside 5'-triphosphate = RNA(n+1) + diphosphate. Functionally, DNA-dependent RNA polymerase catalyzes the transcription of DNA into RNA using the four ribonucleoside triphosphates as substrates. The protein is DNA-directed RNA polymerase subunit beta of Guillardia theta (Cryptophyte).